A 342-amino-acid polypeptide reads, in one-letter code: Protease HtpX homolog (342 aa).

2 consecutive transmembrane segments (helical) span residues 6 to 26 (TAML…LIGG) and 28 to 48 (GGMM…YWNS). A Zn(2+)-binding site is contributed by histidine 130. Glutamate 131 is an active-site residue. Zn(2+) is bound at residue histidine 134. Helical transmembrane passes span 145–165 (ITAT…FFGG) and 173–193 (GGGI…AMLV). Glutamate 202 provides a ligand contact to Zn(2+). The interval 290–342 (PQHSKPAASGPWGSSAERSTDDPWGVKGGASTRSVPKIGRRGKDNDAPKGPWN) is disordered.

It belongs to the peptidase M48B family. Zn(2+) serves as cofactor.

The protein localises to the cell inner membrane. The polypeptide is Protease HtpX homolog (Allorhizobium ampelinum (strain ATCC BAA-846 / DSM 112012 / S4) (Agrobacterium vitis (strain S4))).